A 282-amino-acid polypeptide reads, in one-letter code: D-alanine aminotransferase (282 aa).

Y32 provides a ligand contact to substrate. R51 is a binding site for pyridoxal 5'-phosphate. R99 and H101 together coordinate substrate. K146 acts as the Proton acceptor in catalysis. K146 is subject to N6-(pyridoxal phosphate)lysine. A pyridoxal 5'-phosphate-binding site is contributed by E178.

This sequence belongs to the class-IV pyridoxal-phosphate-dependent aminotransferase family. In terms of assembly, homodimer. Requires pyridoxal 5'-phosphate as cofactor.

The catalysed reaction is D-alanine + 2-oxoglutarate = D-glutamate + pyruvate. Acts on the D-isomers of alanine, leucine, aspartate, glutamate, aminobutyrate, norvaline and asparagine. The enzyme transfers an amino group from a substrate D-amino acid to the pyridoxal phosphate cofactor to form pyridoxamine and an alpha-keto acid in the first half-reaction. The second half-reaction is the reverse of the first, transferring the amino group from the pyridoxamine to a second alpha-keto acid to form the product D-amino acid via a ping-pong mechanism. This is an important process in the formation of D-alanine and D-glutamate, which are essential bacterial cell wall components. This Staphylococcus aureus (strain N315) protein is D-alanine aminotransferase (dat).